We begin with the raw amino-acid sequence, 295 residues long: MTHLFEGVGVALTTPFTNNKVNIEALKTHVNFLLENNAQAIIVNGTTAESPTLTTDEKERILKTVIDLVDKRVPVIAGTGTNDTEKSIQASIQAKALGADAIMLITPYYNKTNQRGLVKHFEAIADAVKLPVVLYNVPSRTNMTIEPETVEILSQHPYIVALKDATNDFEYLEEVKKRIDTNSFALYSGNDDNVVEYYQRGGQGVISVIANVIPKEFQALYDAQQSGLDIQDQFKPIGTLLSALSVDINPIPIKALTSYLGFGNYELRLPLVSLEDTDTKVLRETYDTFKAGENE.

Threonine 47 serves as a coordination point for pyruvate. Tyrosine 135 acts as the Proton donor/acceptor in catalysis. The active-site Schiff-base intermediate with substrate is lysine 163. A pyruvate-binding site is contributed by isoleucine 206.

The protein belongs to the DapA family. Homodimer.

Its subcellular location is the cytoplasm. It catalyses the reaction L-aspartate 4-semialdehyde + pyruvate = (2S,4S)-4-hydroxy-2,3,4,5-tetrahydrodipicolinate + H2O + H(+). The protein operates within amino-acid biosynthesis; L-lysine biosynthesis via DAP pathway; (S)-tetrahydrodipicolinate from L-aspartate: step 3/4. Its activity is regulated as follows. Is not feedback inhibited by lysine. Catalyzes the condensation of (S)-aspartate-beta-semialdehyde [(S)-ASA] and pyruvate to 4-hydroxy-tetrahydrodipicolinate (HTPA). This chain is 4-hydroxy-tetrahydrodipicolinate synthase, found in Staphylococcus aureus (strain COL).